A 77-amino-acid chain; its full sequence is Putative ankyrin repeat protein RC0956 (77 aa).

An ANK repeat occupies 8–38; that stretch reads TDISPLMLASEYGQVTIVKYLLKHGNYNVKG.

This chain is Putative ankyrin repeat protein RC0956, found in Rickettsia conorii (strain ATCC VR-613 / Malish 7).